We begin with the raw amino-acid sequence, 877 residues long: GPI ethanolamine phosphate transferase 2 (877 aa).

N-linked (GlcNAc...) asparagine glycosylation is found at Asn190 and Asn368. The next 5 membrane-spanning stretches (helical) occupy residues 409 to 429 (VDIY…FGLF), 443 to 463 (YNWY…ASSL), 464 to 484 (IEEE…ALYF), 528 to 548 (VDLL…LIYS), and 570 to 590 (DFGS…SFSF). N-linked (GlcNAc...) asparagine glycosylation occurs at Asn611. A run of 6 helical transmembrane segments spans residues 634–654 (IHLS…RIVL), 683–703 (EIVP…KLLA), 716–736 (LMII…FSMG), 758–778 (VFLV…FWSL), 817–837 (LAGF…CFNL), and 854–876 (FASW…ILAL).

It belongs to the PIGG/PIGN/PIGO family. PIGG subfamily.

The protein resides in the endoplasmic reticulum membrane. It functions in the pathway glycolipid biosynthesis; glycosylphosphatidylinositol-anchor biosynthesis. Ethanolamine phosphate transferase involved in glycosylphosphatidylinositol-anchor biosynthesis. Transfers ethanolamine phosphate to the GPI second mannose. In Debaryomyces hansenii (strain ATCC 36239 / CBS 767 / BCRC 21394 / JCM 1990 / NBRC 0083 / IGC 2968) (Yeast), this protein is GPI ethanolamine phosphate transferase 2 (LAS21).